We begin with the raw amino-acid sequence, 243 residues long: MGHKIHPNGLRLGITQEHRSRWYASSKTYPLLLQEDDRIRVFIQKKYGAAGISDVLIARKADQLEVELKTARPGVIVGRQGSGIEELRSGIQKTIGDRSRQVRINVVEIERVDADAHLLAEYIAQQLEKRVAFRRTIRMAVQRAQRAGVLGLKIQVGGRLNGAEIARSEWTREGRVPLHTLRAEIDYANKTANTTYGVLGIKVWVFKGEVLSKEEQPLPVGASPRRKGNRRPQQFEDRSNDGK.

The KH type-2 domain maps to 39 to 110; sequence IRVFIQKKYG…QVRINVVEIE (72 aa). Residues 216-243 form a disordered region; sequence QPLPVGASPRRKGNRRPQQFEDRSNDGK. Over residues 233–243 the composition is skewed to basic and acidic residues; sequence QQFEDRSNDGK.

The protein belongs to the universal ribosomal protein uS3 family. Part of the 30S ribosomal subunit. Forms a tight complex with proteins S10 and S14.

Its function is as follows. Binds the lower part of the 30S subunit head. Binds mRNA in the 70S ribosome, positioning it for translation. This chain is Small ribosomal subunit protein uS3, found in Prochlorococcus marinus (strain SARG / CCMP1375 / SS120).